The sequence spans 174 residues: NAD(P)H-quinone oxidoreductase subunit J, chloroplastic (174 aa).

The protein belongs to the complex I 30 kDa subunit family. In terms of assembly, NDH is composed of at least 16 different subunits, 5 of which are encoded in the nucleus.

Its subcellular location is the plastid. The protein localises to the chloroplast thylakoid membrane. The enzyme catalyses a plastoquinone + NADH + (n+1) H(+)(in) = a plastoquinol + NAD(+) + n H(+)(out). It catalyses the reaction a plastoquinone + NADPH + (n+1) H(+)(in) = a plastoquinol + NADP(+) + n H(+)(out). Its function is as follows. NDH shuttles electrons from NAD(P)H:plastoquinone, via FMN and iron-sulfur (Fe-S) centers, to quinones in the photosynthetic chain and possibly in a chloroplast respiratory chain. The immediate electron acceptor for the enzyme in this species is believed to be plastoquinone. Couples the redox reaction to proton translocation, and thus conserves the redox energy in a proton gradient. The chain is NAD(P)H-quinone oxidoreductase subunit J, chloroplastic from Mesostigma viride (Green alga).